Here is a 154-residue protein sequence, read N- to C-terminus: MTKHVEIFTDGSCLGNPGPGGYGIVLRYKQTEKTLAKGYTLTTNNRMEMLAAVVALQTLKEPCQVTLTTDSQYVRQGITQWIHNWKKRGWKTADKKPVKNADLWQALDKETARHKVDWHWVKGHAGHRENEICDELARTAAENPTEEDTGYQAS.

An RNase H type-1 domain is found at 1 to 142 (MTKHVEIFTD…CDELARTAAE (142 aa)). Mg(2+) contacts are provided by Asp10, Glu48, Asp70, and Asp134.

Belongs to the RNase H family. In terms of assembly, monomer. Mg(2+) serves as cofactor.

It is found in the cytoplasm. It carries out the reaction Endonucleolytic cleavage to 5'-phosphomonoester.. Endonuclease that specifically degrades the RNA of RNA-DNA hybrids. The protein is Ribonuclease H of Vibrio campbellii (strain ATCC BAA-1116).